A 441-amino-acid polypeptide reads, in one-letter code: Arginine biosynthesis bifunctional protein ArgJ, mitochondrial (441 aa).

Residues 1 to 8 constitute a mitochondrion transit peptide; sequence MRISSTLL. Residues Thr177, Lys204, Thr215, Glu301, Asn436, and Ser441 each coordinate substrate. Thr215 (nucleophile) is an active-site residue.

This sequence belongs to the ArgJ family. In terms of assembly, heterodimer of an alpha and a beta chain. Post-translationally, the alpha and beta chains are autoproteolytically processed from a single precursor protein within the mitochondrion.

It is found in the mitochondrion matrix. It catalyses the reaction N(2)-acetyl-L-ornithine + L-glutamate = N-acetyl-L-glutamate + L-ornithine. It carries out the reaction L-glutamate + acetyl-CoA = N-acetyl-L-glutamate + CoA + H(+). The protein operates within amino-acid biosynthesis; L-arginine biosynthesis; L-ornithine and N-acetyl-L-glutamate from L-glutamate and N(2)-acetyl-L-ornithine (cyclic): step 1/1. It participates in amino-acid biosynthesis; L-arginine biosynthesis; N(2)-acetyl-L-ornithine from L-glutamate: step 1/4. Its function is as follows. Catalyzes two activities which are involved in the cyclic version of arginine biosynthesis: the synthesis of acetylglutamate from glutamate and acetyl-CoA, and of ornithine by transacetylation between acetylornithine and glutamate. The protein is Arginine biosynthesis bifunctional protein ArgJ, mitochondrial of Saccharomyces cerevisiae (strain Lalvin EC1118 / Prise de mousse) (Baker's yeast).